We begin with the raw amino-acid sequence, 290 residues long: D-tagatose 3-epimerase (290 aa).

Cysteine 66 is a substrate binding site. The Proton donor/acceptor role is filled by glutamate 152. A Mn(2+)-binding site is contributed by glutamate 152. Residues glutamate 158 and 185-188 (DTFH) contribute to the substrate site. 2 residues coordinate Mn(2+): aspartate 185 and histidine 211. Arginine 217 is a substrate binding site. Glutamate 246 functions as the Proton donor/acceptor in the catalytic mechanism. Glutamate 246 contacts Mn(2+).

The protein belongs to the hyi family. In terms of assembly, homodimer. Mn(2+) serves as cofactor.

It catalyses the reaction keto-D-tagatose = keto-D-sorbose. It carries out the reaction D-allulose = keto-D-fructose. The catalysed reaction is D-ribulose = D-xylulose. Strongly inhibited (about 90% of the enzyme activity) by Ag(+), Hg(2+) and p-chloromercuribenzoic acid. Cu(2+) and Zn(2+) inhibit about 60% of the enzyme activity. In terms of biological role, catalyzes the epimerization of various ketoses at the C(3) position. It is able to interconvert D-tagatose and D-ribulose to D-sorbose and D-xylulose, respectively. The enzyme is also able to accept other ketopentoses such as D-psicose with lower efficiency. The sequence is that of D-tagatose 3-epimerase from Pseudomonas cichorii.